The sequence spans 602 residues: Multidrug and toxin extrusion protein 2 (602 aa).

At 1–33 the chain is on the cytoplasmic side; that stretch reads MDSLQDTVALDHGGCCPALSRLVPRGFGTEMWT. Residues 34–54 traverse the membrane as a helical segment; sequence LFALSGPLFLFQVLTFMIYIV. At 55–66 the chain is on the extracellular side; the sequence is STVFCGHLGKVE. The chain crosses the membrane as a helical span at residues 67–87; it reads LASVTLAVAFVNVCGVSVGVG. Residues 88–119 are Cytoplasmic-facing; sequence LSSACDTLMSQSFGSPNKKHVGVILQRGALVL. A helical transmembrane segment spans residues 120–140; sequence LLCCLPCWALFLNTQHILLLF. Residues 141 to 153 lie on the Extracellular side of the membrane; that stretch reads RQDPDVSRLTQDY. The helical transmembrane segment at 154-174 threads the bilayer; the sequence is VMIFIPGLPVIFLYNLLAKYL. Residues 175 to 219 are Cytoplasmic-facing; sequence QNQGWLKGQEEESPFQTPGLSILHPSHSHLSRASFHLFQKITWPQ. The chain crosses the membrane as a helical span at residues 220–240; sequence VLSGVVGNCVNGVANYALVSV. Over 241-248 the chain is Extracellular; it reads LNLGVRGS. The chain crosses the membrane as a helical span at residues 249-269; the sequence is AYANIISQFAQTVFLLLYIVL. Topologically, residues 270 to 289 are cytoplasmic; the sequence is KKLHLETWAGWSSQCLQDWG. Residues 290 to 309 traverse the membrane as a helical segment; sequence PFFSLAVPSMLMICVEWWAY. Over 310 to 327 the chain is Extracellular; that stretch reads EIGSFLMGLLSVVDLSAQ. A helical membrane pass occupies residues 328-348; sequence AVIYEVATVTYMIPLGLSIGV. Residues 349–368 lie on the Cytoplasmic side of the membrane; sequence CVRVGMALGAADTVQAKRSA. Residues 369-389 traverse the membrane as a helical segment; sequence VSGVLSIVGISLVLGTLISIL. The Extracellular portion of the chain corresponds to 390–402; sequence KNQLGHIFTNDED. The helical transmembrane segment at 403–423 threads the bilayer; the sequence is VIALVSQVLPVYSVFHVFEAI. Over 424 to 442 the chain is Cytoplasmic; that stretch reads CCVYGGVLRGTGKQAFGAA. Residues 443–463 traverse the membrane as a helical segment; that stretch reads VNAITYYIIGLPLGILLTFVV. Residues 464 to 466 lie on the Extracellular side of the membrane; that stretch reads RMR. Residues 467-487 form a helical membrane-spanning segment; it reads IMGLWLGMLACVFLATAAFVA. The Cytoplasmic segment spans residues 488–578; the sequence is YTARLDWKLA…LSVKQLVIRR (91 aa). Residues 503 to 529 are disordered; it reads KHSGRQQQQRAESTATRPGPEKAVLSS. Polar residues predominate over residues 507 to 518; it reads RQQQQRAESTAT. A helical membrane pass occupies residues 579–599; it reads GAALGAASATLMVGLTVRILA. Residues 600 to 602 are Extracellular-facing; it reads TRH.

It belongs to the multi antimicrobial extrusion (MATE) (TC 2.A.66.1) family. In terms of tissue distribution, high expression in kidney. Very small expression in adrenal gland and lung. High expression in kidney. Very small expression in brain and testis. As to expression, ubiquitously expressed in all tissues examined except the kidney.

The protein localises to the cell membrane. It is found in the apical cell membrane. The catalysed reaction is thiamine(out) + H(+)(in) = thiamine(in) + H(+)(out). It catalyses the reaction estrone 3-sulfate(in) + H(+)(out) = estrone 3-sulfate(out) + H(+)(in). It carries out the reaction creatinine(in) + H(+)(out) = creatinine(out) + H(+)(in). Functionally, multidrug efflux pump that functions as a H(+)/organic cation antiporter. Mediates the efflux of cationic compounds, such as the model cations, tetraethylammonium (TEA) and 1-methyl-4-phenylpyridinium (MPP+), the platinum-based drug oxaliplatin or weak bases that are positively charged at physiological pH, cimetidine, the platinum-based drugs cisplatin and oxaliplatin or the antidiabetic drug metformin. Mediates the efflux of endogenous compounds such as, creatinine, thiamine and estrone-3-sulfate. Plays a physiological role in the excretion of drugs, toxins and endogenous metabolites through the kidney. In terms of biological role, non-functional protein. This is Multidrug and toxin extrusion protein 2 from Homo sapiens (Human).